Here is a 305-residue protein sequence, read N- to C-terminus: Large ribosomal subunit protein uL2m (305 aa).

The transit peptide at 1 to 60 directs the protein to the mitochondrion; it reads MALCALTRALRSLNLAPPTVAAPAPSLFPAAQMMNNGLLQQPSALMLLPCRPVLTSVALN. The segment at 264-283 is disordered; sequence RWLGKRPNSGRWHRKGGWAG. Positions 274–283 are enriched in basic residues; that stretch reads RWHRKGGWAG.

It belongs to the universal ribosomal protein uL2 family. Component of the mitochondrial large ribosomal subunit (mt-LSU). Mature mammalian 55S mitochondrial ribosomes consist of a small (28S) and a large (39S) subunit. The 28S small subunit contains a 12S ribosomal RNA (12S mt-rRNA) and 30 different proteins. The 39S large subunit contains a 16S rRNA (16S mt-rRNA), a copy of mitochondrial valine transfer RNA (mt-tRNA(Val)), which plays an integral structural role, and 52 different proteins.

The protein localises to the mitochondrion. The protein is Large ribosomal subunit protein uL2m (MRPL2) of Homo sapiens (Human).